The primary structure comprises 558 residues: Factor VII-activating protease (558 aa).

A signal peptide spans 1–23; sequence MSVVMLVFRVLLLIALVGNSAIG. EGF-like domains lie at 71–107, 109–146, and 148–186; these read DDDP…SRCQ, VQNK…PDCS, and VLPV…RFCE. 18 disulfide bridges follow: Cys75/Cys86, Cys80/Cys95, Cys97/Cys106, Cys113/Cys123, Cys118/Cys134, Cys136/Cys145, Cys152/Cys163, Cys157/Cys174, Cys176/Cys185, Cys192/Cys274, Cys213/Cys255, Cys244/Cys269, Cys299/Cys433, Cys345/Cys361, Cys353/Cys422, Cys445/Cys513, Cys475/Cys491, and Cys503/Cys531. In terms of domain architecture, Kringle spans 191-274; the sequence is DCYVGDGYSY…KWEYCNVEVC (84 aa). The region spanning 312-553 is the Peptidase S1 domain; the sequence is IYGGFKSTAG…FLNWIKTTMH (242 aa). Active-site charge relay system residues include His360 and Asp409. Residue Ser507 is the Charge relay system of the active site.

It belongs to the peptidase S1 family. In terms of assembly, heterodimer; disulfide-linked. Heterodimer of a 50 kDa heavy and a 27 kDa light chain linked by a disulfide bond. Post-translationally, proteolytic cleavage at Gly-23 or Met-27 can give rise to the 50 kDa heavy chain (HC) and cleavage at Arg-311 or Lys-317 can give rise to the 27 kDa light chain (LC). The HC can undergo further proteolytic cleavage giving rise to a 26 kDa fragment. The LC can undergo further proteolytic cleavage at Arg-311 leading to a 17-kDa fragment and at Arg-478 leading to a 8-kDa fragment.

The protein localises to the secreted. Cleaves the alpha-chain at multiple sites and the beta-chain between 'Lys-53' and 'Lys-54' but not the gamma-chain of fibrinogen and therefore does not initiate the formation of the fibrin clot and does not cause the fibrinolysis directly. It does not cleave (activate) prothrombin and plasminogen but converts the inactive single chain urinary plasminogen activator (pro-urokinase) to the active two chain form. Activates coagulation factor VII. May function as a tumor suppressor negatively regulating cell proliferation and cell migration. The polypeptide is Factor VII-activating protease (Rattus norvegicus (Rat)).